Consider the following 897-residue polypeptide: Alanine--tRNA ligase (897 aa).

His581, His585, Cys684, and His688 together coordinate Zn(2+).

It belongs to the class-II aminoacyl-tRNA synthetase family. It depends on Zn(2+) as a cofactor.

The protein resides in the cytoplasm. It catalyses the reaction tRNA(Ala) + L-alanine + ATP = L-alanyl-tRNA(Ala) + AMP + diphosphate. Catalyzes the attachment of alanine to tRNA(Ala) in a two-step reaction: alanine is first activated by ATP to form Ala-AMP and then transferred to the acceptor end of tRNA(Ala). Also edits incorrectly charged Ser-tRNA(Ala) and Gly-tRNA(Ala) via its editing domain. The chain is Alanine--tRNA ligase from Mycobacterium sp. (strain KMS).